Reading from the N-terminus, the 600-residue chain is Epidermal growth factor receptor kinase substrate 8-like protein 3 (600 aa).

One can recognise a PTB domain in the interval 28-155; the sequence is QHRVEHLMTC…ALEEELEERP (128 aa). Disordered stretches follow at residues 152-245 and 429-452; these read EERP…PERD and LHFP…PLSS. Residues 204 to 214 are compositionally biased toward low complexity; sequence SERSISPSSRS. Ser238 carries the phosphoserine modification. An SH3 domain is found at 457-516; that stretch reads RAALKMQVLYEFEARNAQELTVAQGEILEVLDQSKRWWLVKNEAGLTGYIPSNILEPLPA.

The protein belongs to the EPS8 family. In terms of assembly, interacts with ABI1. Part of a complex that contains SOS1, ABI1 and EPS8L2. Interacts with FASLG. In terms of tissue distribution, detected in embryonic gut. Detected in adult testis, placenta, adrenal gland and intestine.

Its subcellular location is the cytoplasm. The polypeptide is Epidermal growth factor receptor kinase substrate 8-like protein 3 (Eps8l3) (Mus musculus (Mouse)).